The following is a 101-amino-acid chain: UPF0473 protein SUB1774 (101 aa).

The protein belongs to the UPF0473 family.

The chain is UPF0473 protein SUB1774 from Streptococcus uberis (strain ATCC BAA-854 / 0140J).